We begin with the raw amino-acid sequence, 235 residues long: MTNQLIYTGKAKDIYSTKDENMIRTVYKDQATMLNGARKETIDGKGALNNQISSLIFEKLNMAGVVTHYIEQISKNEQLNKKVDIIPLEVVLRNVTAGSFSKRFGVEEGRVLETPIVEFYYKNDDLNDPFINDEHVKFLGIVNDEEIAYLKGETRRINELLKDWFAQIGINLIDFKLEFGFDNDGKIILADEFSPDNCRLWDAEGNHMDKDIFRRDLGSLTDAYQVVLDKLKTLD.

It belongs to the SAICAR synthetase family.

The catalysed reaction is 5-amino-1-(5-phospho-D-ribosyl)imidazole-4-carboxylate + L-aspartate + ATP = (2S)-2-[5-amino-1-(5-phospho-beta-D-ribosyl)imidazole-4-carboxamido]succinate + ADP + phosphate + 2 H(+). The protein operates within purine metabolism; IMP biosynthesis via de novo pathway; 5-amino-1-(5-phospho-D-ribosyl)imidazole-4-carboxamide from 5-amino-1-(5-phospho-D-ribosyl)imidazole-4-carboxylate: step 1/2. The protein is Phosphoribosylaminoimidazole-succinocarboxamide synthase of Streptococcus agalactiae serotype Ia (strain ATCC 27591 / A909 / CDC SS700).